An 881-amino-acid polypeptide reads, in one-letter code: Leucine--tRNA ligase (881 aa).

Residues 48–58 carry the 'HIGH' region motif; the sequence is PYPSGKLHMGH. The 'KMSKS' region motif lies at 638 to 642; the sequence is KMSKS. Lys641 serves as a coordination point for ATP.

The protein belongs to the class-I aminoacyl-tRNA synthetase family.

It is found in the cytoplasm. It catalyses the reaction tRNA(Leu) + L-leucine + ATP = L-leucyl-tRNA(Leu) + AMP + diphosphate. The polypeptide is Leucine--tRNA ligase (Herminiimonas arsenicoxydans).